We begin with the raw amino-acid sequence, 346 residues long: Phosphoribosylformylglycinamidine cyclo-ligase (346 aa).

It belongs to the AIR synthase family.

The protein localises to the cytoplasm. The enzyme catalyses 2-formamido-N(1)-(5-O-phospho-beta-D-ribosyl)acetamidine + ATP = 5-amino-1-(5-phospho-beta-D-ribosyl)imidazole + ADP + phosphate + H(+). It functions in the pathway purine metabolism; IMP biosynthesis via de novo pathway; 5-amino-1-(5-phospho-D-ribosyl)imidazole from N(2)-formyl-N(1)-(5-phospho-D-ribosyl)glycinamide: step 2/2. This is Phosphoribosylformylglycinamidine cyclo-ligase from Shewanella halifaxensis (strain HAW-EB4).